Consider the following 359-residue polypeptide: MTTTIQQRSGANGWQSFCEWVTSTNNRLYVGWFGVLMIPTLLAATTCFIVAFIAAPPVDIDGIREPVAGSLIYGNNIISGAVVPSSNAIGLHFYPIWEAASLDEWLYNGGPYQLVVFHFLIGIFCYMGREWELSYRLGMRPWICVAYSAPVAAASAVFLVYPFGQGSFSDGMPLGISGTFNFMLVFQAEHNILMHPFHMMGVAGVFGGSLFSAMHGSLVTSSLVRETTESESQNYGYKFGQEEETYNIVAAHGYFGRLIFQYASFNNSRSLHFFLAAWPVVGIWFTALGVSTMAFNLNGFNFNQSILDGQGRVLNTWADVLNRANLGMEVMHERNAHNFPLDLAAAESTPVALQAPAIG.

Helical transmembrane passes span 29 to 46 (YVGW…AATT), 118 to 133 (HFLI…EWEL), and 142 to 156 (WICV…AASA). Chlorophyll a is bound at residue His-118. Tyr-126 lines the pheophytin a pocket. The [CaMn4O5] cluster site is built by Asp-170 and Glu-189. The helical transmembrane segment at 197–218 (FHMMGVAGVFGGSLFSAMHGSL) threads the bilayer. His-198 contributes to the chlorophyll a binding site. A quinone-binding positions include His-215 and 264-265 (SF). Residue His-215 participates in Fe cation binding. His-272 contacts Fe cation. A helical membrane pass occupies residues 274-288 (FLAAWPVVGIWFTAL). [CaMn4O5] cluster contacts are provided by His-332, Glu-333, Asp-342, and Ala-344. A propeptide spanning residues 345 to 359 (AAESTPVALQAPAIG) is cleaved from the precursor.

It belongs to the reaction center PufL/M/PsbA/D family. PSII is composed of 1 copy each of membrane proteins PsbA, PsbB, PsbC, PsbD, PsbE, PsbF, PsbH, PsbI, PsbJ, PsbK, PsbL, PsbM, PsbT, PsbX, PsbY, PsbZ, Psb30/Ycf12, peripheral proteins PsbO, CyanoQ (PsbQ), PsbU, PsbV and a large number of cofactors. It forms dimeric complexes. It depends on The D1/D2 heterodimer binds P680, chlorophylls that are the primary electron donor of PSII, and subsequent electron acceptors. It shares a non-heme iron and each subunit binds pheophytin, quinone, additional chlorophylls, carotenoids and lipids. D1 provides most of the ligands for the Mn4-Ca-O5 cluster of the oxygen-evolving complex (OEC). There is also a Cl(-1) ion associated with D1 and D2, which is required for oxygen evolution. The PSII complex binds additional chlorophylls, carotenoids and specific lipids. as a cofactor. Tyr-161 forms a radical intermediate that is referred to as redox-active TyrZ, YZ or Y-Z. Post-translationally, C-terminally processed by CtpA; processing is essential to allow assembly of the oxygen-evolving complex and thus photosynthetic growth.

The protein localises to the cellular thylakoid membrane. The enzyme catalyses 2 a plastoquinone + 4 hnu + 2 H2O = 2 a plastoquinol + O2. Its function is as follows. Photosystem II (PSII) is a light-driven water:plastoquinone oxidoreductase that uses light energy to abstract electrons from H(2)O, generating O(2) and a proton gradient subsequently used for ATP formation. It consists of a core antenna complex that captures photons, and an electron transfer chain that converts photonic excitation into a charge separation. The D1/D2 (PsbA/PsbD) reaction center heterodimer binds P680, the primary electron donor of PSII as well as several subsequent electron acceptors. In Synechococcus sp. (strain WH7803), this protein is Photosystem II protein D1 1.